Reading from the N-terminus, the 253-residue chain is Probable transcriptional regulatory protein TM_0466 (253 aa).

The protein belongs to the TACO1 family.

It localises to the cytoplasm. In Thermotoga maritima (strain ATCC 43589 / DSM 3109 / JCM 10099 / NBRC 100826 / MSB8), this protein is Probable transcriptional regulatory protein TM_0466.